Reading from the N-terminus, the 329-residue chain is Holliday junction branch migration complex subunit RuvB (329 aa).

Residues 1–181 (MNELLHQHKA…FGIPLHLEFY (181 aa)) are large ATPase domain (RuvB-L). 9 residues coordinate ATP: Leu20, Arg21, Gly62, Lys65, Thr66, Thr67, Arg171, Tyr181, and Arg218. A Mg(2+)-binding site is contributed by Thr66. A small ATPAse domain (RuvB-S) region spans residues 182-252 (SVEELMLVIK…FADSALFNLG (71 aa)). The interval 255 to 329 (KSGLDKMDIK…IEHLMNYKYI (75 aa)) is head domain (RuvB-H). The DNA site is built by Arg308 and Arg313.

It belongs to the RuvB family. Homohexamer. Forms an RuvA(8)-RuvB(12)-Holliday junction (HJ) complex. HJ DNA is sandwiched between 2 RuvA tetramers; dsDNA enters through RuvA and exits via RuvB. An RuvB hexamer assembles on each DNA strand where it exits the tetramer. Each RuvB hexamer is contacted by two RuvA subunits (via domain III) on 2 adjacent RuvB subunits; this complex drives branch migration. In the full resolvosome a probable DNA-RuvA(4)-RuvB(12)-RuvC(2) complex forms which resolves the HJ.

The protein resides in the cytoplasm. The catalysed reaction is ATP + H2O = ADP + phosphate + H(+). In terms of biological role, the RuvA-RuvB-RuvC complex processes Holliday junction (HJ) DNA during genetic recombination and DNA repair, while the RuvA-RuvB complex plays an important role in the rescue of blocked DNA replication forks via replication fork reversal (RFR). RuvA specifically binds to HJ cruciform DNA, conferring on it an open structure. The RuvB hexamer acts as an ATP-dependent pump, pulling dsDNA into and through the RuvAB complex. RuvB forms 2 homohexamers on either side of HJ DNA bound by 1 or 2 RuvA tetramers; 4 subunits per hexamer contact DNA at a time. Coordinated motions by a converter formed by DNA-disengaged RuvB subunits stimulates ATP hydrolysis and nucleotide exchange. Immobilization of the converter enables RuvB to convert the ATP-contained energy into a lever motion, pulling 2 nucleotides of DNA out of the RuvA tetramer per ATP hydrolyzed, thus driving DNA branch migration. The RuvB motors rotate together with the DNA substrate, which together with the progressing nucleotide cycle form the mechanistic basis for DNA recombination by continuous HJ branch migration. Branch migration allows RuvC to scan DNA until it finds its consensus sequence, where it cleaves and resolves cruciform DNA. The sequence is that of Holliday junction branch migration complex subunit RuvB from Anaplasma phagocytophilum (strain HZ).